We begin with the raw amino-acid sequence, 456 residues long: Adenylyltransferase and sulfurtransferase uba4 (456 aa).

Residues Gly-101, Asp-122, 129 to 133, Lys-146, and 161 to 162 contribute to the ATP site; these read SNLHR and DH. 2 residues coordinate Zn(2+): Cys-210 and Cys-213. Cys-227 acts as the Glycyl thioester intermediate; for adenylyltransferase activity in catalysis. The Zn(2+) site is built by Cys-300 and Cys-303. Residues 350–454 enclose the Rhodanese domain; it reads KEKEHLLIDV…WKEQVDGSWP (105 aa). The active-site Cysteine persulfide intermediate; for sulfurtransferase activity is Cys-409.

In the N-terminal section; belongs to the HesA/MoeB/ThiF family. UBA4 subfamily. The cofactor is Zn(2+).

The protein resides in the cytoplasm. It localises to the cytosol. It catalyses the reaction [molybdopterin-synthase sulfur-carrier protein]-C-terminal Gly-Gly + ATP + H(+) = [molybdopterin-synthase sulfur-carrier protein]-C-terminal Gly-Gly-AMP + diphosphate. It carries out the reaction [molybdopterin-synthase sulfur-carrier protein]-C-terminal Gly-Gly-AMP + S-sulfanyl-L-cysteinyl-[cysteine desulfurase] + AH2 = [molybdopterin-synthase sulfur-carrier protein]-C-terminal-Gly-aminoethanethioate + L-cysteinyl-[cysteine desulfurase] + A + AMP + 2 H(+). It functions in the pathway tRNA modification; 5-methoxycarbonylmethyl-2-thiouridine-tRNA biosynthesis. Its function is as follows. Plays a central role in 2-thiolation of mcm(5)S(2)U at tRNA wobble positions of cytosolic tRNA(Lys), tRNA(Glu) and tRNA(Gln). Also essential during biosynthesis of the molybdenum cofactor. Acts by mediating the C-terminal thiocarboxylation of sulfur carriers urm1 and mocs2a. Its N-terminus first activates urm1 and mocs2a as acyl-adenylates (-COAMP), then the persulfide sulfur on the catalytic cysteine is transferred to urm1 and mocs2a to form thiocarboxylation (-COSH) of their C-terminus. The reaction probably involves hydrogen sulfide that is generated from the persulfide intermediate and that acts as a nucleophile towards urm1 and mocs2a. Subsequently, a transient disulfide bond is formed. Does not use thiosulfate as sulfur donor; nfs1 probably acting as a sulfur donor for thiocarboxylation reactions. The polypeptide is Adenylyltransferase and sulfurtransferase uba4 (Sclerotinia sclerotiorum (strain ATCC 18683 / 1980 / Ss-1) (White mold)).